The following is a 662-amino-acid chain: UvrABC system protein B (662 aa).

Positions 25 to 414 constitute a Helicase ATP-binding domain; the sequence is TGLNSKKRSQ…GTVVELIIRP (390 aa). Position 38-45 (38-45) interacts with ATP; it reads GITGSGKT. The Beta-hairpin signature appears at 91–114; it reads YYDYYQPESYIVRTDTFIEKDSSI. The Helicase C-terminal domain maps to 430–592; sequence QVEDLISEIQ…IIPKTINRAI (163 aa). The region spanning 622–657 is the UVR domain; the sequence is KAHMDKLKKEMFKAASNLEFEQAAKLRNQLKALEEA.

This sequence belongs to the UvrB family. Forms a heterotetramer with UvrA during the search for lesions. Interacts with UvrC in an incision complex.

It localises to the cytoplasm. In terms of biological role, the UvrABC repair system catalyzes the recognition and processing of DNA lesions. A damage recognition complex composed of 2 UvrA and 2 UvrB subunits scans DNA for abnormalities. Upon binding of the UvrA(2)B(2) complex to a putative damaged site, the DNA wraps around one UvrB monomer. DNA wrap is dependent on ATP binding by UvrB and probably causes local melting of the DNA helix, facilitating insertion of UvrB beta-hairpin between the DNA strands. Then UvrB probes one DNA strand for the presence of a lesion. If a lesion is found the UvrA subunits dissociate and the UvrB-DNA preincision complex is formed. This complex is subsequently bound by UvrC and the second UvrB is released. If no lesion is found, the DNA wraps around the other UvrB subunit that will check the other stand for damage. The protein is UvrABC system protein B of Rickettsia prowazekii (strain Madrid E).